Here is a 266-residue protein sequence, read N- to C-terminus: Energy-coupling factor transporter transmembrane protein EcfT 1 (266 aa).

A run of 5 helical transmembrane segments spans residues isoleucine 33–leucine 53, leucine 73–isoleucine 93, leucine 107–isoleucine 127, valine 152–methionine 172, and histidine 243–leucine 263.

Belongs to the energy-coupling factor EcfT family. As to quaternary structure, forms a stable energy-coupling factor (ECF) transporter complex composed of 2 membrane-embedded substrate-binding proteins (S component), 2 ATP-binding proteins (A component) and 2 transmembrane proteins (T component). May be able to interact with more than 1 S component at a time.

The protein resides in the cell membrane. In terms of biological role, transmembrane (T) component of an energy-coupling factor (ECF) ABC-transporter complex. Unlike classic ABC transporters this ECF transporter provides the energy necessary to transport a number of different substrates. In Listeria monocytogenes serotype 1/2a (strain 08-5578), this protein is Energy-coupling factor transporter transmembrane protein EcfT 1.